The sequence spans 327 residues: Phenylalanine--tRNA ligase alpha subunit (327 aa).

Residue Glu252 participates in Mg(2+) binding.

It belongs to the class-II aminoacyl-tRNA synthetase family. Phe-tRNA synthetase alpha subunit type 1 subfamily. Tetramer of two alpha and two beta subunits. Requires Mg(2+) as cofactor.

It localises to the cytoplasm. It carries out the reaction tRNA(Phe) + L-phenylalanine + ATP = L-phenylalanyl-tRNA(Phe) + AMP + diphosphate + H(+). This chain is Phenylalanine--tRNA ligase alpha subunit, found in Shewanella denitrificans (strain OS217 / ATCC BAA-1090 / DSM 15013).